The primary structure comprises 443 residues: Threonine/serine transporter TdcC (443 aa).

The next 11 membrane-spanning stretches (helical) occupy residues 22–42 (TTWTLGLFGTAIGAGVLFFPI), 44–64 (AGFGGLIPILLMLVLAYPIAF), 97–117 (GVVITFLYFFAICPLLWIYGV), 140–160 (FVALFLLLLMAFVIWFGKDLM), 163–183 (VMSYLVWPFIASLVLISLSLI), 207–227 (ILVTVWLGISIMVFSFNFSPI), 259–279 (ASMLMVAVVMFFAFSCLFTLS), 319–339 (ASIIALVAIFKSFFGHYLGTL), 366–386 (ISMIFIMGSTWVVAYANPNIL), 389–409 (IEAMGAPIIASLLCLLPMYAI), and 423–443 (DNVFVTLIGLLTILNIVYKLF).

It belongs to the amino acid/polyamine transporter 2 family. SdaC/TdcC subfamily.

The protein resides in the cell inner membrane. It catalyses the reaction L-threonine(in) + H(+)(in) = L-threonine(out) + H(+)(out). It carries out the reaction L-serine(in) + H(+)(in) = L-serine(out) + H(+)(out). Its function is as follows. Involved in the import of threonine and serine into the cell, with the concomitant import of a proton (symport system). This is Threonine/serine transporter TdcC from Salmonella paratyphi A (strain ATCC 9150 / SARB42).